A 94-amino-acid chain; its full sequence is Serine protease inhibitor Kazal-type 13 (94 aa).

The N-terminal stretch at 1-23 (MAAFPHKIIFFLVCSTLTHVAFS) is a signal peptide. The Kazal-like domain maps to 33–94 (RWPKPRCKMY…IKFEKYGKCD (62 aa)). 3 disulfide bridges follow: C39-C75, C53-C72, and C61-C93. N55 is a glycosylation site (N-linked (GlcNAc...) asparagine).

Its subcellular location is the secreted. May be a serine protease inhibitor. Essential for sperm maturation and fertility. Inhibits sperm acrosome reaction, protecting sperm from premature reaction. The sequence is that of Serine protease inhibitor Kazal-type 13 (SPINK13) from Homo sapiens (Human).